The following is a 286-amino-acid chain: Interferon-induced 35 kDa protein homolog (286 aa).

The leucine-zipper stretch occupies residues leucine 5–leucine 26. NID domains follow at residues alanine 81–glutamate 170 and phenylalanine 183–glutamate 266.

It belongs to the NMI family. In terms of assembly, homodimer. Also interacts with B-ATF. Interacts with TRIM21. Interacts (via NID domains) with NMI (via NID domains); the interaction is direct and is facilitated by TRIM21. Post-translationally, phosphorylated. Dephosphorylation correlates with the formation of a complex with NMI.

The protein resides in the cytoplasm. The protein localises to the nucleus. Its subcellular location is the secreted. In terms of biological role, acts as a signaling pathway regulator involved in innate immune system response. In response to interferon IFN-alpha, associates in a complex with transcriptional regulator NMI to regulate immune response; the complex formation prevents proteasome-mediated degradation of IFI35 and correlates with IFI35 dephosphorylation. In complex with NMI, inhibits virus-triggered type I interferon/IFN-beta production. In complex with NMI, negatively regulates nuclear factor NF-kappa-B signaling by inhibiting the nuclear translocation, activation and transcription of the NF-kappa-B subunit p65/RELA, resulting in the inhibition of endothelial cell proliferation, migration and re-endothelialization of injured arteries. Beside its role as an intracellular signaling pathway regulator, also functions extracellularly as damage-associated molecular patterns (DAMPs) to promote inflammation when actively released by macrophage to the extracellular space during cell injury and pathogen invasion. Macrophage-secreted IFI35 activates NF-kappa-B signaling in adjacent macrophages through Toll-like receptor 4/TLR4 activation, thereby inducing NF-kappa-B translocation from the cytoplasm into the nucleus which promotes the release of pro-inflammatory cytokines. This is Interferon-induced 35 kDa protein homolog from Mus musculus (Mouse).